Reading from the N-terminus, the 394-residue chain is MVDRDIRIAVVGAGVAGLTVAALLRDRGVDCRVFERAPRLVAVGAGIQLSPNGVRVLHGLGLRDSLAATGVRARAIETRSWADGAPIARTPLGDRCEELYGAPYYLIHRADLHRCLTSLLPASAVELGRACARVEERPDAVRLHFTDGTMADADLVIGADGVHSVVRRSVVRDAPRYAGYAVHRGLVPASVVPSFRDDPRVMFWLGPGRHVTYYPVAGGRTVHFSAVGVSPEESPGGGPEDLGAAFGHWHEEVRRVVTSASSVTRWGLYDRDIPDRYATGRVVLLGDAAHPTLPYLSQGANQALEDVTTLVGCLDARPGAPQEAVRQYESLRLPRTAEVHRRARRLAEEFHLPDGPECTDRDQRMRATQDPTHLAWLYGRTAGLPDASDLAPRP.

Residues Ala-16 and Arg-109 each coordinate FAD. Catalysis depends on Tyr-214, which acts as the Proton acceptor. Position 287 (Asp-287) interacts with FAD.

This sequence belongs to the 6-hydroxynicotinate 3-monooxygenase family. It depends on FAD as a cofactor.

The catalysed reaction is 3-amino-4-hydroxybenzoate + NADPH + O2 + H(+) = 3-amino-2,4-dihydroxybenzoate + NADP(+) + H2O. The protein operates within antibiotic biosynthesis. Functionally, part of a gene cluster involved in the biosynthesis of cremeomycin, a light-sensitive o-diazoquinone with antibacterial and antiproliferative effects. Catalyzes the hydroxylation of 3-amino-4-hydroxybenzoate (3,4-AHBA) to 3-amino-2,4-dihydroxybenzoate (3,2,4-ADHBA). This chain is 3-amino-4-hydroxybenzoate 2-monooxygenase, found in Streptomyces cremeus.